We begin with the raw amino-acid sequence, 390 residues long: Transforming growth factor beta-1 proprotein (390 aa).

Residues 1 to 29 form the signal peptide; that stretch reads MPPSGLRLLPLLLPLLWLLMLTPGRPVAG. A straightjacket domain region spans residues 30–74; that stretch reads LSTCKTIDMELVKRKRIEAIRGQILSKLRLASPPSQGDVPPGPLP. Residues 75–271 are arm domain; the sequence is EAILALYNST…ATPLERAQHL (197 aa). Residues asparagine 82, asparagine 136, and asparagine 176 are each glycosylated (N-linked (GlcNAc...) asparagine). Residues 226–252 form a bowtie tail region; it reads DSKDNTLQVDINGFSSGRRGDLATIHG. A Cell attachment site motif is present at residues 244 to 246; sequence RGD. 4 disulfides stabilise this stretch: cysteine 285/cysteine 294, cysteine 293/cysteine 356, cysteine 322/cysteine 387, and cysteine 326/cysteine 389.

It belongs to the TGF-beta family. In terms of assembly, homodimer; disulfide-linked. Interacts with the serine proteases, HTRA1 and HTRA3: the interaction with either inhibits TGFB1-mediated signaling and the HTRA protease activity is required for this inhibition. May interact with THSD4; this interaction may lead to sequestration by FBN1 microfibril assembly and attenuation of TGFB signaling. Interacts with CD109, DPT and ASPN. Interacts with EFEMP2. Interacts with TSKU; the interaction contributes to regulation of the hair cycle. Interacts with TGFBR3. Homodimer; disulfide-linked. Interacts with transforming growth factor beta-1 (TGF-beta-1) chain; interaction is non-covalent and maintains TGF-beta-1 in a latent state; each latency-associated peptide (LAP) monomer interacts with TGF-beta-1 in the other monomer. Interacts with LTBP1; leading to regulation of TGF-beta-1 activation. Interacts with LRRC32/GARP; leading to regulation of TGF-beta-1 activation on the surface of activated regulatory T-cells (Tregs). Interacts with LRRC33/NRROS; leading to regulation of TGF-beta-1 activation in macrophages and microglia. Interacts (via cell attachment site) with integrins ITGAV and ITGB6 (ITGAV:ITGB6), leading to release of the active TGF-beta-1. Interacts with NREP; the interaction results in a decrease in TGFB1 autoinduction. Interacts with HSP90AB1; inhibits latent TGFB1 activation. As to quaternary structure, homodimer; disulfide-linked. Interacts with TGF-beta receptors (TGFBR1 and TGFBR2), leading to signal transduction. Interacts with EFEMP2. Post-translationally, transforming growth factor beta-1 proprotein: The precursor proprotein is cleaved in the Golgi apparatus by FURIN to form Transforming growth factor beta-1 (TGF-beta-1) and Latency-associated peptide (LAP) chains, which remain non-covalently linked, rendering TGF-beta-1 inactive. N-glycosylated. Deglycosylation leads to activation of Transforming growth factor beta-1 (TGF-beta-1); mechanisms triggering deglycosylation-driven activation of TGF-beta-1 are however unclear.

Its subcellular location is the secreted. It is found in the extracellular space. It localises to the extracellular matrix. Its function is as follows. Transforming growth factor beta-1 proprotein: Precursor of the Latency-associated peptide (LAP) and Transforming growth factor beta-1 (TGF-beta-1) chains, which constitute the regulatory and active subunit of TGF-beta-1, respectively. Required to maintain the Transforming growth factor beta-1 (TGF-beta-1) chain in a latent state during storage in extracellular matrix. Associates non-covalently with TGF-beta-1 and regulates its activation via interaction with 'milieu molecules', such as LTBP1, LRRC32/GARP and LRRC33/NRROS, that control activation of TGF-beta-1. Interaction with LRRC33/NRROS regulates activation of TGF-beta-1 in macrophages and microglia. Interaction with LRRC32/GARP controls activation of TGF-beta-1 on the surface of activated regulatory T-cells (Tregs). Interaction with integrins (ITGAV:ITGB6 or ITGAV:ITGB8) results in distortion of the Latency-associated peptide chain and subsequent release of the active TGF-beta-1. Functionally, multifunctional protein that regulates the growth and differentiation of various cell types and is involved in various processes, such as normal development, immune function, microglia function and responses to neurodegeneration. Activation into mature form follows different steps: following cleavage of the proprotein in the Golgi apparatus, Latency-associated peptide (LAP) and Transforming growth factor beta-1 (TGF-beta-1) chains remain non-covalently linked rendering TGF-beta-1 inactive during storage in extracellular matrix. At the same time, LAP chain interacts with 'milieu molecules', such as LTBP1, LRRC32/GARP and LRRC33/NRROS that control activation of TGF-beta-1 and maintain it in a latent state during storage in extracellular milieus. TGF-beta-1 is released from LAP by integrins (ITGAV:ITGB6 or ITGAV:ITGB8): integrin-binding to LAP stabilizes an alternative conformation of the LAP bowtie tail and results in distortion of the LAP chain and subsequent release of the active TGF-beta-1. Once activated following release of LAP, TGF-beta-1 acts by binding to TGF-beta receptors (TGFBR1 and TGFBR2), which transduce signal. While expressed by many cells types, TGF-beta-1 only has a very localized range of action within cell environment thanks to fine regulation of its activation by Latency-associated peptide chain (LAP) and 'milieu molecules'. Plays an important role in bone remodeling: acts as a potent stimulator of osteoblastic bone formation, causing chemotaxis, proliferation and differentiation in committed osteoblasts. Can promote either T-helper 17 cells (Th17) or regulatory T-cells (Treg) lineage differentiation in a concentration-dependent manner. At high concentrations, leads to FOXP3-mediated suppression of RORC and down-regulation of IL-17 expression, favoring Treg cell development. At low concentrations in concert with IL-6 and IL-21, leads to expression of the IL-17 and IL-23 receptors, favoring differentiation to Th17 cells. Stimulates sustained production of collagen through the activation of CREB3L1 by regulated intramembrane proteolysis (RIP). Mediates SMAD2/3 activation by inducing its phosphorylation and subsequent translocation to the nucleus. Positively regulates odontoblastic differentiation in dental papilla cells, via promotion of IPO7-mediated translocation of phosphorylated SMAD2 to the nucleus and subsequent transcription of target genes. Can induce epithelial-to-mesenchymal transition (EMT) and cell migration in various cell types. This chain is Transforming growth factor beta-1 proprotein (TGFB1), found in Bos taurus (Bovine).